Reading from the N-terminus, the 372-residue chain is Dual-specificity RNA methyltransferase RlmN (372 aa).

Glu94 (proton acceptor) is an active-site residue. Positions Asp100–Asp339 constitute a Radical SAM core domain. A disulfide bond links Cys107 and Cys344. [4Fe-4S] cluster-binding residues include Cys114, Cys118, and Cys121. Residues Gly168–Glu169, Ser200, Ser222–His224, and Asn301 each bind S-adenosyl-L-methionine. The S-methylcysteine intermediate role is filled by Cys344.

It belongs to the radical SAM superfamily. RlmN family. The cofactor is [4Fe-4S] cluster.

The protein resides in the cytoplasm. It carries out the reaction adenosine(2503) in 23S rRNA + 2 reduced [2Fe-2S]-[ferredoxin] + 2 S-adenosyl-L-methionine = 2-methyladenosine(2503) in 23S rRNA + 5'-deoxyadenosine + L-methionine + 2 oxidized [2Fe-2S]-[ferredoxin] + S-adenosyl-L-homocysteine. The enzyme catalyses adenosine(37) in tRNA + 2 reduced [2Fe-2S]-[ferredoxin] + 2 S-adenosyl-L-methionine = 2-methyladenosine(37) in tRNA + 5'-deoxyadenosine + L-methionine + 2 oxidized [2Fe-2S]-[ferredoxin] + S-adenosyl-L-homocysteine. Specifically methylates position 2 of adenine 2503 in 23S rRNA and position 2 of adenine 37 in tRNAs. m2A2503 modification seems to play a crucial role in the proofreading step occurring at the peptidyl transferase center and thus would serve to optimize ribosomal fidelity. The protein is Dual-specificity RNA methyltransferase RlmN of Aliivibrio fischeri (strain ATCC 700601 / ES114) (Vibrio fischeri).